Consider the following 355-residue polypeptide: Ubiquinone biosynthesis protein COQ4 homolog, mitochondrial (355 aa).

Residues His134, Asp135, His138, and Glu150 each contribute to the Zn(2+) site.

The protein belongs to the COQ4 family. As to quaternary structure, component of a multi-subunit COQ enzyme complex. Zn(2+) is required as a cofactor.

It is found in the mitochondrion inner membrane. It carries out the reaction a 4-hydroxy-3-methoxy-5-(all-trans-polyprenyl)benzoate + H(+) = a 2-methoxy-6-(all-trans-polyprenyl)phenol + CO2. It participates in cofactor biosynthesis; ubiquinone biosynthesis. In terms of biological role, lyase that catalyzes the C1-decarboxylation of 4-hydroxy-3-methoxy-5-(all-trans-polyprenyl)benzoic acid into 2-methoxy-6-(all-trans-polyprenyl)phenol during ubiquinone biosynthesis. The protein is Ubiquinone biosynthesis protein COQ4 homolog, mitochondrial of Plasmodium falciparum (isolate 3D7).